Reading from the N-terminus, the 104-residue chain is DNA-directed RNA polymerase subunit Rpo13 (104 aa).

Disordered regions lie at residues Met1–Pro34 and Glu76–Gly104. Over residues Thr7–Glu31 the composition is skewed to acidic residues. Glu32 provides a ligand contact to DNA. Residues Ser80 to Gly104 are compositionally biased toward basic residues. The interval Arg81–Gly104 is required to bind DNA.

The protein belongs to the archaeal Rpo13 RNA polymerase subunit family. In terms of assembly, part of the 13-subunit RNA polymerase complex. Rpo1N and Rpo5 form a cleft which docks Rpo13. Forms predominantly dimers in solution, although monomers and trimers can also be seen. Found associated with RNAP but also as a homodimer pool in the cytoplasm in vivo.

The protein localises to the cytoplasm. The enzyme catalyses RNA(n) + a ribonucleoside 5'-triphosphate = RNA(n+1) + diphosphate. DNA-dependent RNA polymerase (RNAP) catalyzes the transcription of DNA into RNA using the four ribonucleoside triphosphates as substrates. A molten-globule protein, it binds dsDNA in the RNAP, in vitro binds dsDNA but not ssDNA. Its position in RNAP implies it functions in both transcription initiation and elongation. The protein is DNA-directed RNA polymerase subunit Rpo13 of Saccharolobus shibatae (strain ATCC 51178 / DSM 5389 / JCM 8931 / NBRC 15437 / B12) (Sulfolobus shibatae).